A 218-amino-acid polypeptide reads, in one-letter code: Adenylate kinase (218 aa).

G10–T15 serves as a coordination point for ATP. The tract at residues S30–V59 is NMP. Residues T31, R36, K57–V59, G85–R88, and Q92 each bind AMP. The interval G122–D159 is LID. ATP is bound by residues R123 and T132–Y133. Residues R156 and R167 each coordinate AMP. Position 203 (G203) interacts with ATP.

It belongs to the adenylate kinase family. Monomer.

Its subcellular location is the cytoplasm. The catalysed reaction is AMP + ATP = 2 ADP. Its pathway is purine metabolism; AMP biosynthesis via salvage pathway; AMP from ADP: step 1/1. Catalyzes the reversible transfer of the terminal phosphate group between ATP and AMP. Plays an important role in cellular energy homeostasis and in adenine nucleotide metabolism. This Chlorobium phaeobacteroides (strain DSM 266 / SMG 266 / 2430) protein is Adenylate kinase.